The sequence spans 209 residues: Mitochondrial import inner membrane translocase subunit Tim23 (209 aa).

Transmembrane regions (helical) follow at residues 73–93, 125–145, and 181–197; these read FELAFFTIGGCCMTGAAFGAM, ALWANTLGSLALLYSAFGVII, and GLTGLTLTSLYALYNNW.

Belongs to the Tim17/Tim22/Tim23 family. In terms of assembly, component of the TIM23 complex at least composed of TIMM23, TIMM17 (TIMM17A or TIMM17B) and TIMM50; within this complex, directly interacts with TIMM50. The complex interacts with the TIMM44 component of the PAM complex and with DNAJC15. Upon mitochondrial depolarization, interacts with PINK1; the interaction is required for PINK1 accumulation at the outer mitochondrial membrane, kinase activation by autophosphorylation and PRKN recruitement to mitochondria.

Its subcellular location is the mitochondrion inner membrane. Functionally, essential component of the TIM23 complex, a complex that mediates the translocation of transit peptide-containing proteins across the mitochondrial inner membrane. Has a role in the activation of stress-induced mitophagy by protecting PINK1 from OMA1-mediated degradation and facilitating its accumulation at the outer mitochondrial membrane in response to depolarization. In Homo sapiens (Human), this protein is Mitochondrial import inner membrane translocase subunit Tim23 (TIMM23).